A 347-amino-acid chain; its full sequence is S-adenosylmethionine:tRNA ribosyltransferase-isomerase (347 aa).

Belongs to the QueA family. As to quaternary structure, monomer.

It localises to the cytoplasm. The catalysed reaction is 7-aminomethyl-7-carbaguanosine(34) in tRNA + S-adenosyl-L-methionine = epoxyqueuosine(34) in tRNA + adenine + L-methionine + 2 H(+). The protein operates within tRNA modification; tRNA-queuosine biosynthesis. In terms of biological role, transfers and isomerizes the ribose moiety from AdoMet to the 7-aminomethyl group of 7-deazaguanine (preQ1-tRNA) to give epoxyqueuosine (oQ-tRNA). This chain is S-adenosylmethionine:tRNA ribosyltransferase-isomerase, found in Bordetella pertussis (strain Tohama I / ATCC BAA-589 / NCTC 13251).